A 251-amino-acid polypeptide reads, in one-letter code: Hydroxyacylglutathione hydrolase (251 aa).

Zn(2+) contacts are provided by H53, H55, D57, H58, H110, D127, and H165.

Belongs to the metallo-beta-lactamase superfamily. Glyoxalase II family. In terms of assembly, monomer. The cofactor is Zn(2+).

It carries out the reaction an S-(2-hydroxyacyl)glutathione + H2O = a 2-hydroxy carboxylate + glutathione + H(+). It functions in the pathway secondary metabolite metabolism; methylglyoxal degradation; (R)-lactate from methylglyoxal: step 2/2. Its function is as follows. Thiolesterase that catalyzes the hydrolysis of S-D-lactoyl-glutathione to form glutathione and D-lactic acid. This is Hydroxyacylglutathione hydrolase from Cronobacter sakazakii (strain ATCC BAA-894) (Enterobacter sakazakii).